Reading from the N-terminus, the 207-residue chain is Urease accessory protein UreG (207 aa).

Position 12 to 19 (12 to 19 (GPVGAGKT)) interacts with GTP.

This sequence belongs to the SIMIBI class G3E GTPase family. UreG subfamily. In terms of assembly, homodimer. UreD, UreF and UreG form a complex that acts as a GTP-hydrolysis-dependent molecular chaperone, activating the urease apoprotein by helping to assemble the nickel containing metallocenter of UreC. The UreE protein probably delivers the nickel.

The protein localises to the cytoplasm. In terms of biological role, facilitates the functional incorporation of the urease nickel metallocenter. This process requires GTP hydrolysis, probably effectuated by UreG. The sequence is that of Urease accessory protein UreG from Cereibacter sphaeroides (strain ATCC 17023 / DSM 158 / JCM 6121 / CCUG 31486 / LMG 2827 / NBRC 12203 / NCIMB 8253 / ATH 2.4.1.) (Rhodobacter sphaeroides).